Consider the following 112-residue polypeptide: Large ribosomal subunit protein eL30z (112 aa).

The protein belongs to the eukaryotic ribosomal protein eL30 family.

This chain is Large ribosomal subunit protein eL30z (RPL30A), found in Arabidopsis thaliana (Mouse-ear cress).